A 641-amino-acid chain; its full sequence is Glycerol metabolism operon regulatory protein (641 aa).

The tract at residues 1–318 (MTTHTQDIGK…MRQLMTSQLG (318 aa)) is sensor domain. In terms of domain architecture, GAF spans 52-189 (ALLTIAQAAL…AIAREVGNSL (138 aa)). The 63-residue stretch at 203 to 265 (NQMYGLLESM…MLLRRAIKHA (63 aa)) folds into the PAS domain. Residues 327–552 (MSTDDPETRR…LNSIIENIAI (226 aa)) enclose the Sigma-54 factor interaction domain. ATP contacts are provided by residues 355-362 (GEEGVGKE) and 415-424 (ANGGTLFLEK).

Functionally, transcriptional activator of the glycerol utilization dha operon. The chain is Glycerol metabolism operon regulatory protein from Citrobacter freundii.